The primary structure comprises 228 residues: Translin (228 aa).

The segment at 86–90 (RFHEH) is DNA/RNA binding. A leucine-zipper region spans residues 177–198 (LDSGFRLLNLKNDSLRKRYDGL). At K187 the chain carries N6-acetyllysine. S190 is subject to Phosphoserine. At K199 the chain carries N6-acetyllysine.

The protein belongs to the translin family. Ring-shaped heterooctamer of six TSN and two TSNAX subunits, DNA/RNA binding occurs inside the ring.

The protein localises to the cytoplasm. The protein resides in the nucleus. DNA-binding protein that specifically recognizes consensus sequences at the breakpoint junctions in chromosomal translocations, mostly involving immunoglobulin (Ig)/T-cell receptor gene segments. Seems to recognize single-stranded DNA ends generated by staggered breaks occurring at recombination hot spots. Its function is as follows. Exhibits both single-stranded and double-stranded endoribonuclease activity. May act as an activator of RNA-induced silencing complex (RISC) by facilitating endonucleolytic cleavage of the siRNA passenger strand. The polypeptide is Translin (TSN) (Cricetulus griseus (Chinese hamster)).